The sequence spans 264 residues: Cyclin-P1-1 (264 aa).

The disordered stretch occupies residues 1 to 25 (MDAAAAAGGEMSRQKATASAPPPPE).

The protein belongs to the cyclin family. Cyclin U/P subfamily.

The protein is Cyclin-P1-1 (CYCP1-1) of Oryza sativa subsp. japonica (Rice).